Consider the following 173-residue polypeptide: Large ribosomal subunit protein bL9 (173 aa).

This sequence belongs to the bacterial ribosomal protein bL9 family.

In terms of biological role, binds to the 23S rRNA. The sequence is that of Large ribosomal subunit protein bL9 from Rickettsia bellii (strain RML369-C).